The following is a 232-amino-acid chain: MTDDTRAVVLASGGMDSATAAYEAQTRGYDHLYLLHTSYGQNTEDREYECASALADHVDAADFLHVETGHLTQIGASSLTDDSMEVADADTDSDEIPTSYVPFRNANLLSMAVSYAEANDCGAVFIGAHSEDFSGYPDCRPAFFDAFQGVIDAGTKPDTDIALVAPFVEWSKTDIAERGVELGVPYADTWSCYRDDEPACGTCDACAFRLEAFQRIGERDPIEYAERPTYAE.

An ATP-binding site is contributed by 11–21 (ASGGMDSATAA). Positions 192, 200, 203, and 206 each coordinate Zn(2+).

It belongs to the QueC family. Requires Zn(2+) as cofactor.

The catalysed reaction is 7-carboxy-7-deazaguanine + NH4(+) + ATP = 7-cyano-7-deazaguanine + ADP + phosphate + H2O + H(+). The protein operates within purine metabolism; 7-cyano-7-deazaguanine biosynthesis. Its function is as follows. Catalyzes the ATP-dependent conversion of 7-carboxy-7-deazaguanine (CDG) to 7-cyano-7-deazaguanine (preQ(0)). The protein is 7-cyano-7-deazaguanine synthase of Haloarcula marismortui (strain ATCC 43049 / DSM 3752 / JCM 8966 / VKM B-1809) (Halobacterium marismortui).